Here is a 105-residue protein sequence, read N- to C-terminus: Saimiri transformation-associated protein (105 aa).

Over 1–75 (MASEPNLRYP…GPPGPSGLPG (75 aa)) the chain is Cytoplasmic. Residues 1–75 (MASEPNLRYP…GPPGPSGLPG (75 aa)) form a disordered region. In terms of domain architecture, Collagen-like spans 15 to 74 (GDRGPQGPPGPPGPQGPPGPQGPPGPQGPPGPQGPPGPQGPPGPQGPPGPPGPPGPSGLP). Positions 20–71 (QGPPGPPGPQGPPGPQGPPGPQGPPGPQGPPGPQGPPGPQGPPGPPGPPGPS) are enriched in pro residues. The helical transmembrane segment at 76-96 (LFVTNLLLGIIILLLLIIVAI) threads the bilayer. The Extracellular segment spans residues 97–105 (LLVSKLVVN).

In terms of assembly, binds to host RAS and TRAF2.

The protein localises to the host membrane. In terms of biological role, acts synergistically with Tip to stimulate NF-kappa-B activity and interleukin-2 gene expression by binding to host TRAF proteins. Activation of NF-kappa-B protects lymphocytes from apoptosis, thereby facilitating viral induced cell transformation. The chain is Saimiri transformation-associated protein from Saimiriine herpesvirus 2 (strain 484-77) (SaHV-2).